The primary structure comprises 472 residues: Kynureninase 2 (472 aa).

Residues Leu133, Thr134, 162-165, Asp247, His250, and Tyr272 each bind pyridoxal 5'-phosphate; that span reads FPSD. Lys273 is subject to N6-(pyridoxal phosphate)lysine. The pyridoxal 5'-phosphate site is built by Trp314 and Asn342.

This sequence belongs to the kynureninase family. Homodimer. Requires pyridoxal 5'-phosphate as cofactor.

The protein resides in the cytoplasm. It catalyses the reaction L-kynurenine + H2O = anthranilate + L-alanine + H(+). It carries out the reaction 3-hydroxy-L-kynurenine + H2O = 3-hydroxyanthranilate + L-alanine + H(+). It functions in the pathway amino-acid degradation; L-kynurenine degradation; L-alanine and anthranilate from L-kynurenine: step 1/1. The protein operates within cofactor biosynthesis; NAD(+) biosynthesis; quinolinate from L-kynurenine: step 2/3. In terms of biological role, catalyzes the cleavage of L-kynurenine (L-Kyn) and L-3-hydroxykynurenine (L-3OHKyn) into anthranilic acid (AA) and 3-hydroxyanthranilic acid (3-OHAA), respectively. The chain is Kynureninase 2 (kyn-2) from Neurospora crassa (strain ATCC 24698 / 74-OR23-1A / CBS 708.71 / DSM 1257 / FGSC 987).